The primary structure comprises 243 residues: Ribosomal RNA small subunit methyltransferase J (243 aa).

Residues 112-113 (ER) and Asp-164 contribute to the S-adenosyl-L-methionine site.

Belongs to the methyltransferase superfamily. RsmJ family.

It is found in the cytoplasm. It catalyses the reaction guanosine(1516) in 16S rRNA + S-adenosyl-L-methionine = N(2)-methylguanosine(1516) in 16S rRNA + S-adenosyl-L-homocysteine + H(+). Functionally, specifically methylates the guanosine in position 1516 of 16S rRNA. The polypeptide is Ribosomal RNA small subunit methyltransferase J (Legionella pneumophila (strain Corby)).